The sequence spans 666 residues: Neurexin-2-beta (666 aa).

The segment covering 1-10 (MPPGGSGPGG) has biased composition (gly residues). Residues 1–30 (MPPGGSGPGGCPRRPPALAGPLPPPPPPPP) are disordered. The N-terminal stretch at 1 to 50 (MPPGGSGPGGCPRRPPALAGPLPPPPPPPPPPLLPLLPLLLLLLLGAAEG) is a signal peptide. The span at 21 to 30 (PLPPPPPPPP) shows a compositional bias: pro residues. The Extracellular portion of the chain corresponds to 51-590 (ARVSSSLSTT…EVIRESSSTT (540 aa)). One can recognise a Laminin G-like domain in the interval 91-299 (TTYIFGKGGA…HLRLVGEGPS (209 aa)). Ca(2+) is bound by residues Asp-143 and Val-160. The N-linked (GlcNAc...) asparagine glycan is linked to Asn-190. 2 residues coordinate Ca(2+): Ile-242 and Asn-244. The disordered stretch occupies residues 327 to 346 (ATTTTRRGRSPTLRDSTTQN). Ser-354 is a glycosylation site (O-linked (Xyl...) (heparan sulfate) serine). Disordered regions lie at residues 412–443 (ATQD…CEEP) and 479–580 (TLLS…PGAV). The chain crosses the membrane as a helical span at residues 591–611 (GMVVGIVAAAALCILILLYAM). At 612 to 666 (YKYRNRDEGSYQVDQSRNYISNSAQSNGAVVKEKAPAAPKTPSKAKKNKDKEYYV) the chain is on the cytoplasmic side. The segment at 633–666 (NSAQSNGAVVKEKAPAAPKTPSKAKKNKDKEYYV) is disordered.

Belongs to the neurexin family. As to quaternary structure, interacts (via cytoplasmic C-terminal region) with CASK. Specific isoforms bind alpha-dystroglycan and neuroligins NLGN1, NLGN2 and NLGN3. Interacts with CBLN1, CBLN2 and, less avidly, with CBLN4. Interacts with CLSTN3. Post-translationally, O-glycosylated; contains heparan sulfate. Heparan sulfate attachment is required for synapse development by mediating interactions with neuroligins.

The protein localises to the presynaptic cell membrane. Neuronal cell surface protein that may be involved in cell recognition and cell adhesion. This Homo sapiens (Human) protein is Neurexin-2-beta (NRXN2).